Reading from the N-terminus, the 125-residue chain is UPF0102 protein ABO_0585 (125 aa).

This sequence belongs to the UPF0102 family.

The protein is UPF0102 protein ABO_0585 of Alcanivorax borkumensis (strain ATCC 700651 / DSM 11573 / NCIMB 13689 / SK2).